A 488-amino-acid chain; its full sequence is uncharacterized protein (488 aa).

The protein localises to the cytoplasm. It localises to the nucleus. This is an uncharacterized protein from Schizosaccharomyces pombe (strain 972 / ATCC 24843) (Fission yeast).